Here is a 427-residue protein sequence, read N- to C-terminus: MLLSQYFLPVLKEEPSEAQVTSHKLMLRSGMIRQQAAGIYTWLPLGLKVLKNIENIVSLNMNKAGALEVLMPCIQPAHLWMESGRFNNYGKEMLKFQDRHDNTLLFGPTNEDMITDIFRHNIKSYKDLPKNLYHIQWKFRDEIRPRFGVMRGREFLMKDAYSFDINEENAVKTYNQMYKAYINTFRDLGVFAIPVIADNGPIGGKLSHEFHIIAETGESTIYYDKRFKTLKDNPDIDVDEIKSWYAAAEEKHDINKLPISEQEITSSKGIEVGHIFYIGSKYSVNMKALINDEHGKLAPVEMSSYGIGISRLVAAIIEANCDEKGIIWPFSVAPFKVSLINLNIHDSKCVELAAKAYKDLSDKNIEVLYDDTEARPGSKFATHDLIGSPHQIIIGPKKAANNIVELKDRKSGNIEDIEVENLINYIK.

This sequence belongs to the class-II aminoacyl-tRNA synthetase family. ProS type 2 subfamily. As to quaternary structure, homodimer.

It is found in the cytoplasm. The catalysed reaction is tRNA(Pro) + L-proline + ATP = L-prolyl-tRNA(Pro) + AMP + diphosphate. Functionally, catalyzes the attachment of proline to tRNA(Pro) in a two-step reaction: proline is first activated by ATP to form Pro-AMP and then transferred to the acceptor end of tRNA(Pro). The protein is Proline--tRNA ligase of Rickettsia akari (strain Hartford).